The following is a 291-amino-acid chain: uncharacterized protein (291 aa).

The tract at residues 1 to 82 is disordered; that stretch reads MEAEKETEQE…SYSSSPFETH (82 aa). 2 stretches are compositionally biased toward low complexity: residues 28–43 and 59–78; these read HSHS…ISAS and STSS…SSSP.

This is an uncharacterized protein from Arabidopsis thaliana (Mouse-ear cress).